A 415-amino-acid polypeptide reads, in one-letter code: ORC1-type DNA replication protein 2 (415 aa).

ATP is bound by residues 69–73 (TGKSV), tyrosine 215, and arginine 227.

Belongs to the CDC6/cdc18 family.

Its function is as follows. Involved in regulation of DNA replication. The chain is ORC1-type DNA replication protein 2 (cdc6-2) from Sulfolobus acidocaldarius (strain ATCC 33909 / DSM 639 / JCM 8929 / NBRC 15157 / NCIMB 11770).